Here is a 609-residue protein sequence, read N- to C-terminus: Myoneurin (609 aa).

One can recognise a BTB domain in the interval 24-89; that stretch reads CDCTILIGDF…IYSGNLNYDS (66 aa). Short sequence motifs (nuclear localization signal) lie at residues 172-188 and 257-262; these read KKSQKIKRWKRPLRSHQ and QKPAKL. 8 consecutive C2H2-type zinc fingers follow at residues 301–323, 329–351, 357–380, 386–408, 414–436, 442–464, 470–492, and 498–521; these read PVCNTCGKVFSEASSLRRHMRIH, YVCHLCAKAFTQCNQLKTHVRTH, YQCKKCDKGFAQKCQLVFHSRMHH, YKCDVCNLQFATSSNLKIHARKH, YVCDRCGQRFAQASTLTYHVRRH, YVCDTCGKAFAVSSSLITHARKH, YICGVCRKSFISSGELNKHFRSH, and FVCEVCGNSYTDVKNLKKHKLKMH. The disordered stretch occupies residues 528–553; that stretch reads IEMKSAENSSSSEDSTTKSPEPESLE. Residues 533–546 are compositionally biased toward low complexity; sequence AENSSSSEDSTTKS.

The protein localises to the nucleus. This is Myoneurin (mynn) from Xenopus laevis (African clawed frog).